The chain runs to 175 residues: Disulfide bond formation protein B (175 aa).

The Cytoplasmic portion of the chain corresponds to 1-13 (MTAFTRFAHSRAS). A helical membrane pass occupies residues 14–30 (WFILTGSAIALEAAALY). The Periplasmic segment spans residues 31–48 (FQYVMKLDPCVMCIYQRL). Cys40 and Cys43 form a disulfide bridge. A helical transmembrane segment spans residues 49–64 (AVFGILASGLIGMTAP). Residues 65 to 71 (KFLIVRI) lie on the Cytoplasmic side of the membrane. A helical membrane pass occupies residues 72-89 (LGAIGWAVSATWGLKLAL). Over 90-144 (ALVDMQNNPSPFSTCSFLPEFPAWMPLHEWFPSVMLPTGMCTDVPWQFMGVTMAE) the chain is Periplasmic. Cys104 and Cys130 are joined by a disulfide. The helical transmembrane segment at 145-163 (WMVVAFSGYLVALLLFIVP) threads the bilayer. At 164–175 (ILSGSNKPSLYK) the chain is on the cytoplasmic side.

This sequence belongs to the DsbB family.

The protein localises to the cell inner membrane. Functionally, required for disulfide bond formation in some periplasmic proteins. Acts by oxidizing the DsbA protein. The protein is Disulfide bond formation protein B of Shewanella sp. (strain ANA-3).